Reading from the N-terminus, the 433-residue chain is Serine--tRNA ligase (433 aa).

235 to 237 (TSE) serves as a coordination point for L-serine. An ATP-binding site is contributed by 266–268 (RSE). Glu-289 serves as a coordination point for L-serine. 353-356 (EISS) provides a ligand contact to ATP. Position 388 (Ser-388) interacts with L-serine.

The protein belongs to the class-II aminoacyl-tRNA synthetase family. Type-1 seryl-tRNA synthetase subfamily. In terms of assembly, homodimer. The tRNA molecule binds across the dimer.

The protein resides in the cytoplasm. It carries out the reaction tRNA(Ser) + L-serine + ATP = L-seryl-tRNA(Ser) + AMP + diphosphate + H(+). It catalyses the reaction tRNA(Sec) + L-serine + ATP = L-seryl-tRNA(Sec) + AMP + diphosphate + H(+). It functions in the pathway aminoacyl-tRNA biosynthesis; selenocysteinyl-tRNA(Sec) biosynthesis; L-seryl-tRNA(Sec) from L-serine and tRNA(Sec): step 1/1. Catalyzes the attachment of serine to tRNA(Ser). Is also able to aminoacylate tRNA(Sec) with serine, to form the misacylated tRNA L-seryl-tRNA(Sec), which will be further converted into selenocysteinyl-tRNA(Sec). The sequence is that of Serine--tRNA ligase from Burkholderia ambifaria (strain MC40-6).